Here is a 352-residue protein sequence, read N- to C-terminus: Secretion system apparatus protein SsaU (352 aa).

The next 4 membrane-spanning stretches (helical) occupy residues 34–54 (LIAL…ILIE), 89–109 (LGAG…GVVI), 144–164 (LKVI…ASTF), and 176–196 (VLVV…FYIV).

Belongs to the type III secretion exporter family.

It localises to the cell membrane. In terms of biological role, part of a type III secretion system. The protein is Secretion system apparatus protein SsaU (ssaU) of Salmonella typhimurium (strain LT2 / SGSC1412 / ATCC 700720).